The primary structure comprises 198 residues: Peptidyl-tRNA hydrolase (198 aa).

TRNA is bound at residue Y16. The active-site Proton acceptor is the H21. Residues F67, N69, and N115 each contribute to the tRNA site.

The protein belongs to the PTH family. Monomer.

It is found in the cytoplasm. It catalyses the reaction an N-acyl-L-alpha-aminoacyl-tRNA + H2O = an N-acyl-L-amino acid + a tRNA + H(+). In terms of biological role, hydrolyzes ribosome-free peptidyl-tRNAs (with 1 or more amino acids incorporated), which drop off the ribosome during protein synthesis, or as a result of ribosome stalling. Catalyzes the release of premature peptidyl moieties from peptidyl-tRNA molecules trapped in stalled 50S ribosomal subunits, and thus maintains levels of free tRNAs and 50S ribosomes. This Prochlorococcus marinus (strain MIT 9301) protein is Peptidyl-tRNA hydrolase.